A 347-amino-acid chain; its full sequence is Calcium homeostasis modulator protein 3 (347 aa).

Residues 1 to 20 (MDRFRMLFQHLQSSSESVMN) are Cytoplasmic-facing. The central pore stretch occupies residues 9–36 (QHLQSSSESVMNGICLLLAAVTVKIYSS). The helical transmembrane segment at 21–36 (GICLLLAAVTVKIYSS) threads the bilayer. Residues 37–48 (LDFNCPCLERYN) lie on the Extracellular side of the membrane. 2 disulfide bridges follow: Cys41–Cys126 and Cys43–Cys157. A helical membrane pass occupies residues 49–71 (ALYGLGLLLTPPLALFLCGLLVN). Over 72–98 (RQSVLMVEEWRRPAGHRRKDLGIIRYM) the chain is Cytoplasmic. Cys99 carries the S-palmitoyl cysteine lipid modification. The chain crosses the membrane as a helical span at residues 99 to 124 (CSSVLQRALAAPLVWILLALLDGKCF). The Extracellular portion of the chain corresponds to 125–176 (VCAFSNSVDPEKFLDFANMTPRQVQLFLAKVPCKEDELVKNSPARKAVSRYL). Asn142 is a glycosylation site (N-linked (GlcNAc...) asparagine). A helical transmembrane segment spans residues 177 to 202 (RCLSQAIGWSITLLVIVVAFLARCLR). S-palmitoyl cysteine attachment occurs at residues Cys200 and Cys204. Residues 203–347 (PCFDQTVFLQ…GTKLCHQLNV (145 aa)) are Cytoplasmic-facing. Positions 265-290 (GGIPESQESSEPPELREDRDSGNGKA) are disordered. Basic and acidic residues predominate over residues 277 to 286 (PELREDRDSG).

The protein belongs to the CALHM family. In terms of assembly, associates with CALHM1 as a pore-forming subunit in a hetero-hexameric channel complex. Post-translationally, N-glycosylated. Palmitoylated by ZDHHC3 and ZDHHC15. Palmitoylation positively regulates CALHM1:CALHM3 channel conductance. As to expression, expressed in taste bud cells.

Its subcellular location is the basolateral cell membrane. The enzyme catalyses ATP(in) = ATP(out). It carries out the reaction Ca(2+)(in) = Ca(2+)(out). It catalyses the reaction Na(+)(in) = Na(+)(out). The catalysed reaction is K(+)(in) = K(+)(out). The enzyme catalyses chloride(in) = chloride(out). Its function is as follows. Pore-forming subunit of gustatory voltage-gated ion channels required for sensory perception of sweet, bitter and umami tastes. With CALHM1 forms a fast-activating voltage-gated ATP-release channel in type II taste bud cells, ATP acting as a neurotransmitter to activate afferent neural gustatory pathways. Acts both as a voltage-gated and calcium-activated ion channel: mediates neuronal excitability in response to membrane depolarization and low extracellular Ca(2+) concentration. Has poor ion selectivity and forms a wide pore (around 14 Angstroms) that mediates permeation of small ions including Ca(2+), Na(+), K(+) and Cl(-), as well as larger ions such as ATP(4-). The sequence is that of Calcium homeostasis modulator protein 3 from Mus musculus (Mouse).